Here is a 195-residue protein sequence, read N- to C-terminus: Thymidine kinase (195 aa).

Residues 8–15 (GLMGSGKS) and 86–89 (DESQ) each bind ATP. E87 serves as the catalytic Proton acceptor. C146, C151, C184, and H187 together coordinate Zn(2+).

Belongs to the thymidine kinase family. As to quaternary structure, homotetramer.

The protein localises to the cytoplasm. The enzyme catalyses thymidine + ATP = dTMP + ADP + H(+). The polypeptide is Thymidine kinase (tdk) (Bacillus subtilis subsp. natto).